The sequence spans 441 residues: Peroxisomal multifunctional enzyme A (441 aa).

The tract at residues 1 to 302 (MALNFKDKVV…VNSKPADGES (302 aa)) is 3-hydroxyacyl-CoA dehydrogenase. NAD(+) is bound by residues 11–35 (IVTG…AKVV), Ile-19, Asp-38, 73–74 (SV), and Asn-97. Ser-149 is a binding site for substrate. Catalysis depends on Tyr-162, which acts as the Proton acceptor. NAD(+) contacts are provided by residues 162–166 (YGSMK) and 194–197 (AASR). Positions 331–440 (ASKIFTTIQG…KLGALMQGSK (110 aa)) constitute an SCP2 domain. Gln-412 contacts substrate.

Belongs to the short-chain dehydrogenases/reductases (SDR) family.

It is found in the peroxisome. The enzyme catalyses a (3S)-3-hydroxyacyl-CoA + NAD(+) = a 3-oxoacyl-CoA + NADH + H(+). It participates in lipid metabolism; fatty acid beta-oxidation. In terms of biological role, enzyme acting on the peroxisomal beta-oxidation pathway for fatty acids. Protects the cells from the increase of the harmful xenobiotic fatty acids incorporated from their diets and optimizes cellular lipid composition for proper development. This is Peroxisomal multifunctional enzyme A (mfeA) from Dictyostelium discoideum (Social amoeba).